A 28-amino-acid polypeptide reads, in one-letter code: Dermaseptin-1 (28 aa).

Glutamine 28 carries the post-translational modification Glutamine amide.

In terms of tissue distribution, expressed by the skin glands.

It localises to the secreted. Has antimicrobial activity. This chain is Dermaseptin-1, found in Phyllomedusa tomopterna (Tiger-striped leaf frog).